The sequence spans 253 residues: MTTIDLNCDLGESFGAYKMGNDDEILPFVSSINVACGFHAGDPSVMRQTVEKAMQHNVAIGAHPGFPDLIGFGRRNMNVSANEVYDYVLYQIGALDAFVKAAGGKMQHVKPHGALYNMAATNPEIADAIAKAIHHMNPSLLLYGLANSEAFIQAAEKYNITLVQEAFADRTYKQDGTLTSRTEENALIKNEDEAIKQVLQMVKEGYVNTVNGKKVAVHAQTICLHGDGEKAVQFAEKIYRTFKLNNISICAPK.

The protein belongs to the LamB/PxpA family. Forms a complex composed of PxpA, PxpB and PxpC.

The catalysed reaction is 5-oxo-L-proline + ATP + 2 H2O = L-glutamate + ADP + phosphate + H(+). In terms of biological role, catalyzes the cleavage of 5-oxoproline to form L-glutamate coupled to the hydrolysis of ATP to ADP and inorganic phosphate. The polypeptide is 5-oxoprolinase subunit A (Bacillus cereus (strain 03BB102)).